A 224-amino-acid chain; its full sequence is Phosphoribosyltransferase domain-containing protein 1 (224 aa).

Residues glutamate 140 and aspartate 141 each contribute to the Mg(2+) site. GMP is bound by residues 140 to 148 (EDIINTGRT), lysine 172, 193 to 194 (FV), and aspartate 200. Aspartate 200 is a binding site for Mg(2+).

This sequence belongs to the purine/pyrimidine phosphoribosyltransferase family.

This chain is Phosphoribosyltransferase domain-containing protein 1 (prtfdc1), found in Xenopus tropicalis (Western clawed frog).